The primary structure comprises 117 residues: Probable prefoldin subunit 1 (117 aa).

This sequence belongs to the prefoldin subunit beta family. In terms of assembly, heterohexamer of two PFD-alpha type and four PFD-beta type subunits. As to expression, expressed in the distal cell tip of developing embryos.

It localises to the cytoplasm. Functionally, binds specifically to cytosolic chaperonin (c-CPN) and transfers target proteins to it. Binds to nascent polypeptide chain and promotes folding in an environment in which there are many competing pathways for nonnative proteins. Has a role in gonadogenesis. The polypeptide is Probable prefoldin subunit 1 (pfd-1) (Caenorhabditis elegans).